A 340-amino-acid chain; its full sequence is Glyceraldehyde-3-phosphate dehydrogenase (340 aa).

Residues 11–12 (SI) and Gly111 each bind NAD(+). 140–142 (SCN) lines the D-glyceraldehyde 3-phosphate pocket. Catalysis depends on Cys141, which acts as the Nucleophile. NAD(+) is bound at residue Arg169. Residue 195-196 (HG) participates in D-glyceraldehyde 3-phosphate binding. NAD(+) is bound at residue Gln303.

The protein belongs to the glyceraldehyde-3-phosphate dehydrogenase family. As to quaternary structure, homotetramer.

The protein localises to the cytoplasm. The catalysed reaction is D-glyceraldehyde 3-phosphate + phosphate + NADP(+) = (2R)-3-phospho-glyceroyl phosphate + NADPH + H(+). It catalyses the reaction D-glyceraldehyde 3-phosphate + phosphate + NAD(+) = (2R)-3-phospho-glyceroyl phosphate + NADH + H(+). It participates in carbohydrate degradation; glycolysis; pyruvate from D-glyceraldehyde 3-phosphate: step 1/5. The chain is Glyceraldehyde-3-phosphate dehydrogenase from Methanococcus maripaludis (strain C7 / ATCC BAA-1331).